The following is a 279-amino-acid chain: Biotin synthase (279 aa).

One can recognise a Radical SAM core domain in the interval 1–228; it reads MKDIFLCSIC…SARLMIAGGR (228 aa). Residues C17, C21, and C24 each coordinate [4Fe-4S] cluster. [2Fe-2S] cluster is bound by residues C61, C96, C154, and R221.

It belongs to the radical SAM superfamily. Biotin synthase family. Homodimer. The cofactor is [4Fe-4S] cluster. It depends on [2Fe-2S] cluster as a cofactor.

It carries out the reaction (4R,5S)-dethiobiotin + (sulfur carrier)-SH + 2 reduced [2Fe-2S]-[ferredoxin] + 2 S-adenosyl-L-methionine = (sulfur carrier)-H + biotin + 2 5'-deoxyadenosine + 2 L-methionine + 2 oxidized [2Fe-2S]-[ferredoxin]. It functions in the pathway cofactor biosynthesis; biotin biosynthesis; biotin from 7,8-diaminononanoate: step 2/2. Catalyzes the conversion of dethiobiotin (DTB) to biotin by the insertion of a sulfur atom into dethiobiotin via a radical-based mechanism. The sequence is that of Biotin synthase from Wolinella succinogenes (strain ATCC 29543 / DSM 1740 / CCUG 13145 / JCM 31913 / LMG 7466 / NCTC 11488 / FDC 602W) (Vibrio succinogenes).